Consider the following 49-residue polypeptide: MELILDCFVNWSFDKIMDYILIAGLYFVFKSKSKQNYPDHFEEKRRHRN.

The helical transmembrane segment at 7–29 (CFVNWSFDKIMDYILIAGLYFVF) threads the bilayer.

The protein localises to the cell membrane. The polypeptide is SPbeta prophage-derived uncharacterized protein YoqT (yoqT) (Bacillus subtilis (strain 168)).